The following is a 186-amino-acid chain: Putative transcriptional regulator encoded by LINC00473 (186 aa).

The disordered stretch occupies residues 1–62 (MELSAAAGRR…RDCTPTCTNA (62 aa)). The span at 18-40 (FTGRHRTERSQERGSTPRKERSM) shows a compositional bias: basic and acidic residues.

Functionally, may play a role in cAMP-mediated gene transcription. In Homo sapiens (Human), this protein is Putative transcriptional regulator encoded by LINC00473 (LINC00473).